A 1225-amino-acid chain; its full sequence is DNA-directed RNA polymerase subunit beta' (1225 aa).

Zn(2+) contacts are provided by cysteine 60, cysteine 62, cysteine 75, and cysteine 78. Residues aspartate 450, aspartate 452, and aspartate 454 each coordinate Mg(2+). Positions 818, 892, 899, and 902 each coordinate Zn(2+).

Belongs to the RNA polymerase beta' chain family. In terms of assembly, the RNAP catalytic core consists of 2 alpha, 1 beta, 1 beta' and 1 omega subunit. When a sigma factor is associated with the core the holoenzyme is formed, which can initiate transcription. Mg(2+) is required as a cofactor. Zn(2+) serves as cofactor.

It catalyses the reaction RNA(n) + a ribonucleoside 5'-triphosphate = RNA(n+1) + diphosphate. DNA-dependent RNA polymerase catalyzes the transcription of DNA into RNA using the four ribonucleoside triphosphates as substrates. This chain is DNA-directed RNA polymerase subunit beta', found in Streptococcus pneumoniae (strain P1031).